The primary structure comprises 325 residues: Bifunctional ligase/repressor BirA (325 aa).

Residues 23 to 42 (GQKISDALGCSRTAVWKHIE) constitute a DNA-binding region (H-T-H motif). The BPL/LPL catalytic domain maps to 74 to 262 (RFGLKTEVMG…CFEKRYRDYM (189 aa)). Residues glutamine 118, 122–124 (RGR), and lysine 189 each bind biotin.

Belongs to the biotin--protein ligase family.

The catalysed reaction is biotin + L-lysyl-[protein] + ATP = N(6)-biotinyl-L-lysyl-[protein] + AMP + diphosphate + H(+). Its function is as follows. Acts both as a biotin--[acetyl-CoA-carboxylase] ligase and a repressor. In Bacillus spizizenii (strain ATCC 23059 / NRRL B-14472 / W23) (Bacillus subtilis subsp. spizizenii), this protein is Bifunctional ligase/repressor BirA.